The chain runs to 238 residues: MKLTPKELDKLMLHYAGELAKKRKEKGIKLNYVEAVALISAHIMEEARAGKKTAAELMQEGRTLLKPDDVMDGVASMIHEVGIEAMFPDGTKLVTVHTPIEANGKLVPGELFLKNEDITINEGKKAVSVKVKNVGDRPVQIGSHFHFFEVNRCLDFDREKTFGKRLDIASGTAVRFEPGEEKSVELIDIGGNRRIFGFNALVDRQADNESKKIALHRAKERGFHGAKSDDNYVKTIKE.

Residues 1-102 (MKLTPKELDK…LVTVHTPIEA (102 aa)) form a urease gamma region. Residues 103–238 (NGKLVPGELF…DDNYVKTIKE (136 aa)) are urease beta.

It in the N-terminal section; belongs to the urease gamma subunit family. The protein in the C-terminal section; belongs to the urease beta subunit family. As to quaternary structure, heterohexamer of 3 UreA (alpha) and 3 UreB (beta) subunits.

Its subcellular location is the cytoplasm. The enzyme catalyses urea + 2 H2O + H(+) = hydrogencarbonate + 2 NH4(+). Its pathway is nitrogen metabolism; urea degradation; CO(2) and NH(3) from urea (urease route): step 1/1. The protein is Urease subunit alpha of Helicobacter pylori (strain P12).